The following is a 332-amino-acid chain: DNA-directed RNA polymerase subunit alpha (332 aa).

An alpha N-terminal domain (alpha-NTD) region spans residues 1–244; it reads MKKHAKVYYS…AHLNLLADVE (244 aa). Residues 259–332 are alpha C-terminal domain (alpha-CTD); the sequence is IKEEPIRRFS…NYKNENKGEN (74 aa).

Belongs to the RNA polymerase alpha chain family. In terms of assembly, homodimer. The RNAP catalytic core consists of 2 alpha, 1 beta, 1 beta' and 1 omega subunit. When a sigma factor is associated with the core the holoenzyme is formed, which can initiate transcription.

It carries out the reaction RNA(n) + a ribonucleoside 5'-triphosphate = RNA(n+1) + diphosphate. Its function is as follows. DNA-dependent RNA polymerase catalyzes the transcription of DNA into RNA using the four ribonucleoside triphosphates as substrates. The polypeptide is DNA-directed RNA polymerase subunit alpha (Mesomycoplasma hyopneumoniae (strain 232) (Mycoplasma hyopneumoniae)).